Reading from the N-terminus, the 159-residue chain is SsrA-binding protein (159 aa).

A compositionally biased stretch (basic and acidic residues) spans 140-150; that stretch reads RATEKERDWNR. Positions 140–159 are disordered; the sequence is RATEKERDWNRQKQRVLRQR.

This sequence belongs to the SmpB family.

It localises to the cytoplasm. Functionally, required for rescue of stalled ribosomes mediated by trans-translation. Binds to transfer-messenger RNA (tmRNA), required for stable association of tmRNA with ribosomes. tmRNA and SmpB together mimic tRNA shape, replacing the anticodon stem-loop with SmpB. tmRNA is encoded by the ssrA gene; the 2 termini fold to resemble tRNA(Ala) and it encodes a 'tag peptide', a short internal open reading frame. During trans-translation Ala-aminoacylated tmRNA acts like a tRNA, entering the A-site of stalled ribosomes, displacing the stalled mRNA. The ribosome then switches to translate the ORF on the tmRNA; the nascent peptide is terminated with the 'tag peptide' encoded by the tmRNA and targeted for degradation. The ribosome is freed to recommence translation, which seems to be the essential function of trans-translation. This chain is SsrA-binding protein, found in Alcanivorax borkumensis (strain ATCC 700651 / DSM 11573 / NCIMB 13689 / SK2).